A 313-amino-acid chain; its full sequence is Homoserine O-succinyltransferase (313 aa).

The active-site Acyl-thioester intermediate is the C142. Substrate-binding residues include K163 and S192. Residue H235 is the Proton acceptor of the active site. E237 is a catalytic residue. R249 contributes to the substrate binding site.

This sequence belongs to the MetA family.

The protein localises to the cytoplasm. It carries out the reaction L-homoserine + succinyl-CoA = O-succinyl-L-homoserine + CoA. Its pathway is amino-acid biosynthesis; L-methionine biosynthesis via de novo pathway; O-succinyl-L-homoserine from L-homoserine: step 1/1. Transfers a succinyl group from succinyl-CoA to L-homoserine, forming succinyl-L-homoserine. This is Homoserine O-succinyltransferase from Vibrio campbellii (strain ATCC BAA-1116).